A 218-amino-acid chain; its full sequence is MSAVEWSILPGLSPYRETLEAMENRVAAIRAGEAAEAIWLLEHPPLYTAGTSARPEDLVEPERFPVHVAGRGGQYTYHGPGQRVAYVMLDLDRRGRDVRRFVTALEDWVIATLAEFNVRGERREGRVGVWVVRPDRPAGLDGSPREDKIAAIGVKLRRWVSFHGLSINVEPNLTHFEGIVPCGIREHGVTSLVDLGLPVTMQDLDAALLRTFPQHFPD.

Residues 32–218 enclose the BPL/LPL catalytic domain; that stretch reads GEAAEAIWLL…LRTFPQHFPD (187 aa). Substrate contacts are provided by residues 71–78, 151–153, and 164–166; these read RGGQYTYH, AIG, and GLS. The active-site Acyl-thioester intermediate is Cys-182.

This sequence belongs to the LipB family.

It localises to the cytoplasm. The catalysed reaction is octanoyl-[ACP] + L-lysyl-[protein] = N(6)-octanoyl-L-lysyl-[protein] + holo-[ACP] + H(+). The protein operates within protein modification; protein lipoylation via endogenous pathway; protein N(6)-(lipoyl)lysine from octanoyl-[acyl-carrier-protein]: step 1/2. Functionally, catalyzes the transfer of endogenously produced octanoic acid from octanoyl-acyl-carrier-protein onto the lipoyl domains of lipoate-dependent enzymes. Lipoyl-ACP can also act as a substrate although octanoyl-ACP is likely to be the physiological substrate. The chain is Octanoyltransferase from Cereibacter sphaeroides (strain ATCC 17023 / DSM 158 / JCM 6121 / CCUG 31486 / LMG 2827 / NBRC 12203 / NCIMB 8253 / ATH 2.4.1.) (Rhodobacter sphaeroides).